We begin with the raw amino-acid sequence, 358 residues long: Methionine aminopeptidase 2 (358 aa).

Residue histidine 109 participates in substrate binding. A divalent metal cation is bound by residues aspartate 130, aspartate 141, and histidine 210. Histidine 218 serves as a coordination point for substrate. Residues glutamate 243 and glutamate 339 each contribute to the a divalent metal cation site.

The protein belongs to the peptidase M24A family. Methionine aminopeptidase eukaryotic type 2 subfamily. Co(2+) is required as a cofactor. Zn(2+) serves as cofactor. The cofactor is Mn(2+). Requires Fe(2+) as cofactor.

The protein localises to the cytoplasm. It carries out the reaction Release of N-terminal amino acids, preferentially methionine, from peptides and arylamides.. Functionally, cotranslationally removes the N-terminal methionine from nascent proteins. The N-terminal methionine is often cleaved when the second residue in the primary sequence is small and uncharged (Met-Ala-, Cys, Gly, Pro, Ser, Thr, or Val). This is Methionine aminopeptidase 2 from Encephalitozoon intestinalis (strain ATCC 50506) (Microsporidian parasite).